A 95-amino-acid polypeptide reads, in one-letter code: Aspartyl/glutamyl-tRNA(Asn/Gln) amidotransferase subunit C (95 aa).

It belongs to the GatC family. As to quaternary structure, heterotrimer of A, B and C subunits.

It carries out the reaction L-glutamyl-tRNA(Gln) + L-glutamine + ATP + H2O = L-glutaminyl-tRNA(Gln) + L-glutamate + ADP + phosphate + H(+). It catalyses the reaction L-aspartyl-tRNA(Asn) + L-glutamine + ATP + H2O = L-asparaginyl-tRNA(Asn) + L-glutamate + ADP + phosphate + 2 H(+). Its function is as follows. Allows the formation of correctly charged Asn-tRNA(Asn) or Gln-tRNA(Gln) through the transamidation of misacylated Asp-tRNA(Asn) or Glu-tRNA(Gln) in organisms which lack either or both of asparaginyl-tRNA or glutaminyl-tRNA synthetases. The reaction takes place in the presence of glutamine and ATP through an activated phospho-Asp-tRNA(Asn) or phospho-Glu-tRNA(Gln). The protein is Aspartyl/glutamyl-tRNA(Asn/Gln) amidotransferase subunit C of Clostridium botulinum (strain ATCC 19397 / Type A).